The following is a 336-amino-acid chain: Ferrochelatase (336 aa).

His206 and Glu287 together coordinate Fe cation.

The protein belongs to the ferrochelatase family.

The protein resides in the cytoplasm. It catalyses the reaction heme b + 2 H(+) = protoporphyrin IX + Fe(2+). It participates in porphyrin-containing compound metabolism; protoheme biosynthesis; protoheme from protoporphyrin-IX: step 1/1. Catalyzes the ferrous insertion into protoporphyrin IX. This is Ferrochelatase from Neisseria meningitidis serogroup C / serotype 2a (strain ATCC 700532 / DSM 15464 / FAM18).